Reading from the N-terminus, the 358-residue chain is MASHDQEAFLTAMQIVNSSAVDGVLICLIELNVFDIMMQKAGMDGYLHPDEIALNLPTKNPQAPEMLDRMLRILASHSIIKCKLVKKMSGNALLTRAYGLTLISQYFVNAQDGPCLAPYLKLIHHKQMQNSWEKVNEAVLEGGYAFNKAHAGSTFFEYLGKDKSVAELLSQTMAKSIPTSMNILLKSYKGFEGVKEVVDVGGAYAATLSCIISFNPHVKGINFDVPHVIKNAPSLPGITHVGGDMFESVPRGEAIVLQRVLHDWTDEESVKILKKCYEAIPDHGKVVIIEMIQTEMPEDDIIAKNISEMDIRMLLYTPGGKERTVNEFLMLGKQAGFPSSKYICGADLYGVVELYKKK.

5 residues coordinate S-adenosyl-L-methionine: Gly-201, Asp-224, Asp-244, Met-245, and Arg-259. Catalysis depends on His-262, which acts as the Proton acceptor.

The protein belongs to the class I-like SAM-binding methyltransferase superfamily. Cation-independent O-methyltransferase family. COMT subfamily. Highly expressed in developing fruits. Expressed at low levels in roots, young leaves, buds and flowers.

The catalysed reaction is (E)-anol + S-adenosyl-L-methionine = (E)-anethole + S-adenosyl-L-homocysteine + H(+). The enzyme catalyses (E)-isoeugenol + S-adenosyl-L-methionine = (E)-isomethyleugenol + S-adenosyl-L-homocysteine + H(+). Its pathway is aromatic compound metabolism; phenylpropanoid biosynthesis. Its activity is regulated as follows. Inhibited by zinc and copper. Functionally, phenylpropene O-methyltransferase that catalyzes the conversion of trans-anol to trans-anethole and isoeugenol to isomethyleugenol. Phenylpropenes are the primary constituents of various essential plant oils. They are produced as antimicrobial and antianimal compounds, or as floral attractants of pollinators. The polypeptide is Trans-anol O-methyltransferase 1 (AIMT1) (Pimpinella anisum (Anise)).